The following is a 924-amino-acid chain: Alpha-actinin, sarcomeric (924 aa).

Residues M1–H250 are actin-binding. 2 consecutive Calponin-homology (CH) domains span residues K34–A138 and M147–Q253. Spectrin repeat units follow at residues A251–D395, I396–R510, I511–D631, and M632–T744. EF-hand domains follow at residues E778–S813 and Q819–D854. Ca(2+)-binding residues include D791, N793, T795, R797, and E802.

This sequence belongs to the alpha-actinin family. In terms of assembly, homodimer; antiparallel. Interacts with Smn; the interaction occurs in adult thoracic tissues. As to expression, larval muscle isoform is expressed in the larval body wall, adult muscles of the head and abdomen and supercontractile muscles of the larva and adult. Adult muscle isoform accumulates within adult fibrillar and tubular muscles.

It is found in the cytoplasm. The protein localises to the myofibril. Its subcellular location is the sarcomere. The protein resides in the z line. Its function is as follows. F-actin cross-linking protein which is thought to anchor actin to a variety of intracellular structures. This is a bundling protein. The sequence is that of Alpha-actinin, sarcomeric (Actn) from Drosophila melanogaster (Fruit fly).